Here is a 217-residue protein sequence, read N- to C-terminus: UPF0319 protein HS_1349 (217 aa).

The signal sequence occupies residues 1–21 (MKFSFAALASAMLLTSTAAFA).

This sequence belongs to the UPF0319 family.

The sequence is that of UPF0319 protein HS_1349 from Histophilus somni (strain 129Pt) (Haemophilus somnus).